We begin with the raw amino-acid sequence, 136 residues long: Small ribosomal subunit protein uS8c (136 aa).

Belongs to the universal ribosomal protein uS8 family. Part of the 30S ribosomal subunit.

The protein resides in the plastid. It localises to the chloroplast. One of the primary rRNA binding proteins, it binds directly to 16S rRNA central domain where it helps coordinate assembly of the platform of the 30S subunit. In Citrus sinensis (Sweet orange), this protein is Small ribosomal subunit protein uS8c (rps8).